Reading from the N-terminus, the 348-residue chain is UDP-glucose 4-epimerase (348 aa).

Substrate is bound at residue threonine 125. The active-site Proton acceptor is tyrosine 149.

It belongs to the NAD(P)-dependent epimerase/dehydratase family. NAD(+) serves as cofactor.

The enzyme catalyses UDP-alpha-D-glucose = UDP-alpha-D-galactose. It functions in the pathway carbohydrate metabolism; galactose metabolism. It participates in glycan metabolism; exopolysaccharide biosynthesis. The chain is UDP-glucose 4-epimerase (exoB) from Azospirillum brasilense.